The sequence spans 282 residues: Heterogeneous nuclear ribonucleoprotein C (282 aa).

The 72-residue stretch at 17–88 (SRVFIGNLNT…QVLDINLAAE (72 aa)) folds into the RRM domain. Disordered stretches follow at residues 131 to 177 (APPP…RLKG) and 208 to 282 (QSKQ…EEDS). The Nuclear localization signal signature appears at 141 to 147 (PSKRQRV). Over residues 161–172 (SKSGQRGGSSKS) the composition is skewed to low complexity. The stretch at 177–217 (GDDLQAIKKELSQIKQRVDSLLENLERIERDQSKQDTKLDD) forms a coiled coil. 2 stretches are compositionally biased toward basic and acidic residues: residues 208–217 (QSKQDTKLDD) and 224–235 (LKKEETGVKLIE). 2 stretches are compositionally biased toward acidic residues: residues 236 to 257 (ETGD…EDTL) and 265 to 282 (KETE…EEDS).

It belongs to the RRM HNRPC family. RALY subfamily. Tetramer.

The protein localises to the nucleus. Its function is as follows. Binds pre-mRNA and nucleates the assembly of 40S hnRNP particles. Interacts with poly-U tracts in the 3'-UTR or 5'-UTR of mRNA and modulates the stability and the level of translation of bound mRNA molecules. Single HNRNPC tetramers bind 230-240 nucleotides. Trimers of HNRNPC tetramers bind 700 nucleotides. May play a role in the early steps of spliceosome assembly and pre-mRNA splicing. N6-methyladenosine (m6A) has been shown to alter the local structure in mRNAs and long non-coding RNAs (lncRNAs) via a mechanism named 'm(6)A-switch', facilitating binding of HNRNPC, leading to regulation of mRNA splicing. The chain is Heterogeneous nuclear ribonucleoprotein C (hnrnpc) from Xenopus laevis (African clawed frog).